A 210-amino-acid polypeptide reads, in one-letter code: Fibroblast growth factor 21 (210 aa).

A signal peptide spans 1 to 28; it reads MEWMRSRVGTLGLWVRLLLAVFLLGVYQ. A disordered region spans residues 144 to 210; sequence PLRLPQKDSP…LQGRSPSYAS (67 aa).

The protein belongs to the heparin-binding growth factors family. In terms of assembly, interacts (via C-terminus) with KLB; this interaction is direct. Interacts with FGFR4. In terms of tissue distribution, most abundantly expressed in the liver, also expressed in the thymus at lower levels. Expressed in skeletal muscle (at protein level). Secreted in plasma (at protein level).

It localises to the secreted. In terms of biological role, stimulates glucose uptake in differentiated adipocytes via the induction of glucose transporter SLC2A1/GLUT1 expression (but not SLC2A4/GLUT4 expression). Activity probably requires the presence of KLB. Regulates systemic glucose homeostasis and insulin sensitivity. This Mus musculus (Mouse) protein is Fibroblast growth factor 21 (Fgf21).